A 469-amino-acid polypeptide reads, in one-letter code: Glutamate--tRNA ligase 1 (469 aa).

A 'HIGH' region motif is present at residues 11–21 (PSPTGHLHLGG). A 'KMSKS' region motif is present at residues 238-242 (KLSKR). Residue Lys-241 coordinates ATP.

It belongs to the class-I aminoacyl-tRNA synthetase family. Glutamate--tRNA ligase type 1 subfamily. As to quaternary structure, monomer.

Its subcellular location is the cytoplasm. It carries out the reaction tRNA(Glu) + L-glutamate + ATP = L-glutamyl-tRNA(Glu) + AMP + diphosphate. In terms of biological role, catalyzes the attachment of glutamate to tRNA(Glu) in a two-step reaction: glutamate is first activated by ATP to form Glu-AMP and then transferred to the acceptor end of tRNA(Glu). This Ehrlichia canis (strain Jake) protein is Glutamate--tRNA ligase 1.